The sequence spans 559 residues: Serine/threonine-protein kinase bur1 (559 aa).

The 302-residue stretch at 40-341 (YEVLGKLGEG…AIDALNHPYF (302 aa)) folds into the Protein kinase domain. Residues 46 to 54 (LGEGTFGEV) and lysine 69 contribute to the ATP site. The Proton acceptor role is filled by aspartate 171. Residues 359–372 (SHEFDRRKFQDRKA) are compositionally biased toward basic and acidic residues. The segment at 359–559 (SHEFDRRKFQ…GRDRDAYARR (201 aa)) is disordered. Gly residues predominate over residues 400 to 414 (GRDGYGGGGRNGANG). Composition is skewed to basic and acidic residues over residues 457–467 (DHTDGYRDRPP), 491–534 (YDRD…DSRT), and 543–559 (PVRDRDRGRDRDAYARR).

This sequence belongs to the protein kinase superfamily. CMGC Ser/Thr protein kinase family. CDC2/CDKX subfamily.

The protein localises to the nucleus. The enzyme catalyses L-seryl-[protein] + ATP = O-phospho-L-seryl-[protein] + ADP + H(+). It catalyses the reaction L-threonyl-[protein] + ATP = O-phospho-L-threonyl-[protein] + ADP + H(+). The catalysed reaction is [DNA-directed RNA polymerase] + ATP = phospho-[DNA-directed RNA polymerase] + ADP + H(+). In terms of biological role, serine/threonine-protein kinase involved in transcription regulation. Phosphorylates the mus-8/ubc2 ubiquitin-conjugating enzyme (E2), leading to monoubiquitination of histone H2B and the silencing of telomeric-associated genes. Also required for histone H3 methylation. Necessary for the recovery from pheromone-induced growth arrest in the cell cycle G1 phase. In Neurospora crassa (strain ATCC 24698 / 74-OR23-1A / CBS 708.71 / DSM 1257 / FGSC 987), this protein is Serine/threonine-protein kinase bur1 (stk-1).